The primary structure comprises 341 residues: tRNA N6-adenosine threonylcarbamoyltransferase (341 aa).

Fe cation is bound by residues histidine 111 and histidine 115. Residues 133–137 (AVSGG), aspartate 166, glycine 179, aspartate 183, and asparagine 273 contribute to the substrate site. Aspartate 301 contributes to the Fe cation binding site.

The protein belongs to the KAE1 / TsaD family. It depends on Fe(2+) as a cofactor.

The protein localises to the cytoplasm. It carries out the reaction L-threonylcarbamoyladenylate + adenosine(37) in tRNA = N(6)-L-threonylcarbamoyladenosine(37) in tRNA + AMP + H(+). In terms of biological role, required for the formation of a threonylcarbamoyl group on adenosine at position 37 (t(6)A37) in tRNAs that read codons beginning with adenine. Is involved in the transfer of the threonylcarbamoyl moiety of threonylcarbamoyl-AMP (TC-AMP) to the N6 group of A37, together with TsaE and TsaB. TsaD likely plays a direct catalytic role in this reaction. The protein is tRNA N6-adenosine threonylcarbamoyltransferase of Geobacter metallireducens (strain ATCC 53774 / DSM 7210 / GS-15).